A 721-amino-acid polypeptide reads, in one-letter code: Catalase-peroxidase (721 aa).

Positions Trp95–Tyr223 form a cross-link, tryptophyl-tyrosyl-methioninium (Trp-Tyr) (with M-249). The Proton acceptor role is filled by His96. Positions Tyr223–Met249 form a cross-link, tryptophyl-tyrosyl-methioninium (Tyr-Met) (with W-95). His264 lines the heme b pocket.

Belongs to the peroxidase family. Peroxidase/catalase subfamily. As to quaternary structure, homodimer or homotetramer. Heme b serves as cofactor. In terms of processing, formation of the three residue Trp-Tyr-Met cross-link is important for the catalase, but not the peroxidase activity of the enzyme.

It catalyses the reaction H2O2 + AH2 = A + 2 H2O. The catalysed reaction is 2 H2O2 = O2 + 2 H2O. Functionally, bifunctional enzyme with both catalase and broad-spectrum peroxidase activity. In Parvibaculum lavamentivorans (strain DS-1 / DSM 13023 / NCIMB 13966), this protein is Catalase-peroxidase.